The primary structure comprises 853 residues: Eukaryotic translation initiation factor 3 subunit C (853 aa).

Positions 1-78 are disordered; the sequence is MSRFFAASDS…EDEDQNKVLK (78 aa). A compositionally biased stretch (acidic residues) spans 11 to 46; that stretch reads SSEESSEEELYSDNEASAQEDSDKDSDDDDSDDDDS. One can recognise a PCI domain in the interval 599-773; sequence FHMHINLELL…SAIIFRKGVE (175 aa). The disordered stretch occupies residues 798 to 853; the sequence is TLEQRTQGTANAFERQGGRGGRGGGRGRGGGRGGGVPRGGRNQQFTGGALGRAIQA. Residues 815–835 show a composition bias toward gly residues; sequence GRGGRGGGRGRGGGRGGGVPR.

It belongs to the eIF-3 subunit C family. In terms of assembly, component of the eukaryotic translation initiation factor 3 (eIF-3) complex.

Its subcellular location is the cytoplasm. In terms of biological role, component of the eukaryotic translation initiation factor 3 (eIF-3) complex, which is involved in protein synthesis of a specialized repertoire of mRNAs and, together with other initiation factors, stimulates binding of mRNA and methionyl-tRNAi to the 40S ribosome. The eIF-3 complex specifically targets and initiates translation of a subset of mRNAs involved in cell proliferation. In Phaeosphaeria nodorum (strain SN15 / ATCC MYA-4574 / FGSC 10173) (Glume blotch fungus), this protein is Eukaryotic translation initiation factor 3 subunit C.